We begin with the raw amino-acid sequence, 475 residues long: Glycogen synthase (475 aa).

K15 serves as a coordination point for ADP-alpha-D-glucose.

This sequence belongs to the glycosyltransferase 1 family. Bacterial/plant glycogen synthase subfamily.

The enzyme catalyses [(1-&gt;4)-alpha-D-glucosyl](n) + ADP-alpha-D-glucose = [(1-&gt;4)-alpha-D-glucosyl](n+1) + ADP + H(+). It participates in glycan biosynthesis; glycogen biosynthesis. Synthesizes alpha-1,4-glucan chains using ADP-glucose. In Chlamydia caviae (strain ATCC VR-813 / DSM 19441 / 03DC25 / GPIC) (Chlamydophila caviae), this protein is Glycogen synthase.